The primary structure comprises 257 residues: uncharacterized protein (257 aa).

The next 6 membrane-spanning stretches (helical) occupy residues 23-43 (VLTD…EGLL), 79-99 (FIFI…VLGA), 131-151 (TFGI…AFSV), 158-178 (FAVS…ILMM), 199-219 (AFVL…HYEM), and 221-241 (HSVF…IHYI).

It belongs to the TerC family.

It is found in the cell membrane. This is an uncharacterized protein from Bacillus subtilis (strain 168).